Consider the following 354-residue polypeptide: Interferon-inducible protein AIM2 (354 aa).

Residues 1 to 87 enclose the Pyrin domain; that stretch reads MESEYREMLL…ANALEEKKKE (87 aa). Positions 95–124 are disordered; sequence NTKKRGTQKVENRSQAENCSAASATRSDND. Positions 109–120 are enriched in polar residues; sequence QAENCSAASATR. The 198-residue stretch at 144-341 folds into the HIN-200 domain; the sequence is MVAEQEAIRE…SGPCSFFKVI (198 aa).

The protein belongs to the HIN-200 family. In terms of assembly, self-associates; forms homooligomers in response to cytosolic double-stranded DNA (dsDNA) and the dsDNA seems to serve as oligomerization platform. Component of AIM2 inflammasome, which consists of a signal sensor component (AIM2), an adapter (PYCARD/ASC), which recruits an effector pro-inflammatory caspase (CASP1). Interacts (via pyrin domain) with PYCARD/ASC (via pyrin domain); interaction is direct. Component of the AIM2 PANoptosome complex, a multiprotein complex that drives inflammatory cell death (PANoptosis). Interacts with EIF2AK2/PKR. Interacts with MAPRE1. Interacts (via HIN-200 domain) with IFI202 (via HIN-200 domain 2); preventing activation of the AIM2 inflammasome. Interacts with RACK1; promoting association with PP2A phosphatase and dephosphorylation of AKT1. Interacts with TRIM11; promoting AIM2 recruitment to autophagosomes and autophagy-dependent degradation. Degraded via selective autophagy following interaction with TRIM11. As to expression, expressed in developing neurons. Highly expressed in regulatory T-cells (Treg).

It is found in the cytoplasm. Its subcellular location is the inflammasome. The protein localises to the nucleus. Inactive in absence of double-stranded DNA (dsDNA). Homooligomerizes upon binding to dsDNA, dsDNA serving as an oligomerization platform. AIM2 requires large dsDNA to generate a structural template that couples dsDNA ligand-binding and homooligomerization. Homooligomerization is followed by recruitment of PYCARD/ASC to initiate speck formation (nucleation). AIM2 and PYCARD/ASC homooligomer filaments assemble bidirectionally and the recognition between AIM2 and PYCARD/ASC oligomers occurs in a head-to-tail manner. Clustered PYCARD/ASC nucleates the formation of CASP1 filaments through the interaction of their respective CARD domains, acting as a platform for CASP1 polymerization and activation. Active CASP1 then specifically processes protein precursors, such as gasdermin-D (GSDMD), IL1B and IL18, leading to the release of mature cytokines in the extracellular milieu or pyroptosis, depending on cell type. AIM2 can be activated in response to events that cause genomic DNA (HIV protease inhibitor nelfinavir) or mitochondrial DNA release in the cytoplasm (such as Perfluoroalkyl substance pollutants or cholesterol overload). Activation of the AIM2 inflammasome is inhibited by IFI202. Activation of the AIM2 inflammasome is inhibited by TRIM11, which promotes autophagy-dependent degradation of AIM2. Sensor component of the AIM2 inflammasome, which mediates inflammasome activation in response to the presence of double-stranded DNA (dsDNA) in the cytosol, leading to subsequent pyroptosis. Inflammasomes are supramolecular complexes that assemble in the cytosol in response to pathogens and other damage-associated signals and play critical roles in innate immunity and inflammation. Acts as a recognition receptor (PRR): specifically recognizes and binds dsDNA in the cytosol, and mediates the formation of the inflammasome polymeric complex composed of AIM2, CASP1 and PYCARD/ASC. Recruitment of pro-caspase-1 (proCASP1) to the AIM2 inflammasome promotes caspase-1 (CASP1) activation, which subsequently cleaves and activates inflammatory cytokines IL1B and IL18 and gasdermin-D (GSDMD), promoting cytokine secretion. In some cells, CASP1 activation mediates cleavage and activation of GSDMD, triggering pyroptosis without promoting cytokine secretion. Detects cytosolic dsDNA of viral and bacterial origin in a non-sequence-specific manner. Involved in the DNA damage response caused by acute ionizing radiation by mediating pyroptosis of intestinal epithelial cells and bone marrow cells in response to double-strand DNA breaks. Mechanistically, AIM2 senses DNA damage in the nucleus to mediate inflammasome assembly and inflammatory cell death. Also acts as a regulator of neurodevelopment via its role in the DNA damage response: acts by promoting neural cell death in response to DNA damage in the developing brain, thereby purging genetically compromised cells of the central nervous system. Pyroptosis mediated by the AIM2 inflammasome in response to DNA damage is dependent on GSDMD without involving IL1B and IL18 cytokine secretion. Also acts as a mediator of pyroptosis, necroptosis and apoptosis (PANoptosis), an integral part of host defense against pathogens, in response to bacterial infection. Can also trigger PYCARD/ASC-dependent, caspase-1-independent cell death that involves caspase-8 (CASP8). Its function is as follows. Also acts as a tumor suppressor independently of its role in inflammatory response. Able to suppress overt cell proliferation in enterocytes: restricts stem cell proliferation in the intestinal mucosa in an inflammasome-independent manner, contributing to a decrease in the likelihood of colorectal cancer development. AIM2 suppresses cell proliferation by inhibiting phosphorylation of AKT1 at 'Ser-473', preventing AKT1 activation and AKT-mTOR signaling pathway. Inhibits AKT1 phosphorylation both by inhibiting the activity of PRKDC/DNA-PK kinase and promoting dephosphorylation by PP2A phosphatase. Also acts as a key regulator of regulatory T-cells (Treg) homeostasis by promoting their stability: acts by preventing AKT1 activation. Its role in Treg homeostasis is important to restain autoimmune diseases. This Mus musculus (Mouse) protein is Interferon-inducible protein AIM2.